The sequence spans 143 residues: Ribosome-binding factor A (143 aa).

The segment at 117–143 is disordered; sequence DAEIARRSQGAMPAGEADPYRHSDEEE. Basic and acidic residues predominate over residues 134-143; the sequence is DPYRHSDEEE.

This sequence belongs to the RbfA family. Monomer. Binds 30S ribosomal subunits, but not 50S ribosomal subunits or 70S ribosomes.

The protein resides in the cytoplasm. In terms of biological role, one of several proteins that assist in the late maturation steps of the functional core of the 30S ribosomal subunit. Associates with free 30S ribosomal subunits (but not with 30S subunits that are part of 70S ribosomes or polysomes). Required for efficient processing of 16S rRNA. May interact with the 5'-terminal helix region of 16S rRNA. The protein is Ribosome-binding factor A of Cutibacterium acnes (strain DSM 16379 / KPA171202) (Propionibacterium acnes).